The sequence spans 382 residues: MTTSTVKNNLLGLTQPEMEKFFDSIGEKRFRAGQVMKWIHHFGVDDFDAMTNVSKALREKLKAVAEVRGPEVVSEDISSDGTRKWVVRVASGSCVETVYIPQGKRGTLCVSSQAGCALDCSFCSTGKQGFNSNLTAAEVIGQVWIANKSFGSVPATIDRAITNVVMMGMGEPLLNFDNVVAAMHLMMDDLGYGISKRRVTLSTSGVVPMIDELAKHIDVSLALSLHAPNDALRNQLVPINKKYPLKMLLESCQRYMSALGEKRVLTIEYTLLKDVNDKLEHAVEMIELLKDIPCKINLIPFNPFPHSGYERPSNNAIRRFQDQLHQAGFNVTVRTTRGEDIDAACGQLVGQVLDRTRRSERYIAVRELSADSDLAQNAANTN.

Residue Glu96 is the Proton acceptor of the active site. In terms of domain architecture, Radical SAM core spans 102-342; the sequence is QGKRGTLCVS…VRTTRGEDID (241 aa). The cysteines at positions 109 and 345 are disulfide-linked. Positions 116, 120, and 123 each coordinate [4Fe-4S] cluster. Residues 170 to 171, Ser202, 224 to 226, and Asn302 each bind S-adenosyl-L-methionine; these read GE and SLH. Cys345 (S-methylcysteine intermediate) is an active-site residue.

This sequence belongs to the radical SAM superfamily. RlmN family. Requires [4Fe-4S] cluster as cofactor.

The protein localises to the cytoplasm. It catalyses the reaction adenosine(2503) in 23S rRNA + 2 reduced [2Fe-2S]-[ferredoxin] + 2 S-adenosyl-L-methionine = 2-methyladenosine(2503) in 23S rRNA + 5'-deoxyadenosine + L-methionine + 2 oxidized [2Fe-2S]-[ferredoxin] + S-adenosyl-L-homocysteine. The catalysed reaction is adenosine(37) in tRNA + 2 reduced [2Fe-2S]-[ferredoxin] + 2 S-adenosyl-L-methionine = 2-methyladenosine(37) in tRNA + 5'-deoxyadenosine + L-methionine + 2 oxidized [2Fe-2S]-[ferredoxin] + S-adenosyl-L-homocysteine. Its function is as follows. Specifically methylates position 2 of adenine 2503 in 23S rRNA and position 2 of adenine 37 in tRNAs. m2A2503 modification seems to play a crucial role in the proofreading step occurring at the peptidyl transferase center and thus would serve to optimize ribosomal fidelity. This chain is Dual-specificity RNA methyltransferase RlmN, found in Pseudomonas fluorescens (strain Pf0-1).